A 556-amino-acid polypeptide reads, in one-letter code: 2-succinyl-5-enolpyruvyl-6-hydroxy-3-cyclohexene-1-carboxylate synthase (556 aa).

The protein belongs to the TPP enzyme family. MenD subfamily. Homodimer. The cofactor is Mg(2+). It depends on Mn(2+) as a cofactor. Thiamine diphosphate serves as cofactor.

It carries out the reaction isochorismate + 2-oxoglutarate + H(+) = 5-enolpyruvoyl-6-hydroxy-2-succinyl-cyclohex-3-ene-1-carboxylate + CO2. The protein operates within quinol/quinone metabolism; 1,4-dihydroxy-2-naphthoate biosynthesis; 1,4-dihydroxy-2-naphthoate from chorismate: step 2/7. It participates in quinol/quinone metabolism; menaquinone biosynthesis. Functionally, catalyzes the thiamine diphosphate-dependent decarboxylation of 2-oxoglutarate and the subsequent addition of the resulting succinic semialdehyde-thiamine pyrophosphate anion to isochorismate to yield 2-succinyl-5-enolpyruvyl-6-hydroxy-3-cyclohexene-1-carboxylate (SEPHCHC). This is 2-succinyl-5-enolpyruvyl-6-hydroxy-3-cyclohexene-1-carboxylate synthase from Salmonella choleraesuis (strain SC-B67).